Here is a 496-residue protein sequence, read N- to C-terminus: Transcription termination factor MTERF9, chloroplastic (496 aa).

The transit peptide at 1-44 directs the protein to the chloroplast; that stretch reads MAGFSLYCFKNPRILFTLPSESPLFVLGSDKCSPATRRPSRKTR. Disordered stretches follow at residues 57 to 90 and 102 to 155; these read IINPKKKSRYGQTLSPYDSDEDDDDDDDDDDDDW and YEKK…SWRL. Residues 74–90 show a composition bias toward acidic residues; it reads DSDEDDDDDDDDDDDDW. Over residues 105–123 the composition is skewed to basic residues; the sequence is KKPKSHKQTIAKKSVKKGI. A compositionally biased stretch (basic and acidic residues) spans 146-155; sequence SEKKKESWRL.

Belongs to the mTERF family.

The protein resides in the plastid. The protein localises to the chloroplast. Functionally, transcription termination factor required for processing and steady-state levels of plastid transcripts. May play a role in response to abiotic stresses. The polypeptide is Transcription termination factor MTERF9, chloroplastic (Arabidopsis thaliana (Mouse-ear cress)).